The chain runs to 89 residues: Small ribosomal subunit protein uS15 (89 aa).

Belongs to the universal ribosomal protein uS15 family. As to quaternary structure, part of the 30S ribosomal subunit. Forms a bridge to the 50S subunit in the 70S ribosome, contacting the 23S rRNA.

In terms of biological role, one of the primary rRNA binding proteins, it binds directly to 16S rRNA where it helps nucleate assembly of the platform of the 30S subunit by binding and bridging several RNA helices of the 16S rRNA. Functionally, forms an intersubunit bridge (bridge B4) with the 23S rRNA of the 50S subunit in the ribosome. In Kocuria rhizophila (strain ATCC 9341 / DSM 348 / NBRC 103217 / DC2201), this protein is Small ribosomal subunit protein uS15.